Reading from the N-terminus, the 275-residue chain is NH(3)-dependent NAD(+) synthetase (275 aa).

Residue 43–50 (GISGGVDS) coordinates ATP. D49 contributes to the Mg(2+) binding site. Residue R145 coordinates deamido-NAD(+). T165 lines the ATP pocket. E170 contributes to the Mg(2+) binding site. K178 and D185 together coordinate deamido-NAD(+). ATP contacts are provided by K194 and T216. A deamido-NAD(+)-binding site is contributed by 265–266 (HK).

The protein belongs to the NAD synthetase family. Homodimer.

The catalysed reaction is deamido-NAD(+) + NH4(+) + ATP = AMP + diphosphate + NAD(+) + H(+). It participates in cofactor biosynthesis; NAD(+) biosynthesis; NAD(+) from deamido-NAD(+) (ammonia route): step 1/1. Catalyzes the ATP-dependent amidation of deamido-NAD to form NAD. Uses ammonia as a nitrogen source. This Shewanella denitrificans (strain OS217 / ATCC BAA-1090 / DSM 15013) protein is NH(3)-dependent NAD(+) synthetase.